Consider the following 320-residue polypeptide: Olfactory receptor 13C8 (320 aa).

Over methionine 1–threonine 25 the chain is Extracellular. A glycan (N-linked (GlcNAc...) asparagine) is linked at asparagine 5. The chain crosses the membrane as a helical span at residues valine 26–isoleucine 46. Over serine 47–histidine 54 the chain is Cytoplasmic. Residues leucine 55 to serine 75 traverse the membrane as a helical segment. At serine 76–valine 99 the chain is on the extracellular side. Cysteine 97 and cysteine 189 are disulfide-bonded. The chain crosses the membrane as a helical span at residues glutamine 100–leucine 120. The Cytoplasmic segment spans residues aspartate 121 to glycine 139. A helical membrane pass occupies residues alanine 140–threonine 160. At alanine 161 to isoleucine 197 the chain is on the extracellular side. A helical transmembrane segment spans residues serine 198–serine 217. Over tyrosine 218 to alanine 237 the chain is Cytoplasmic. Residues phenylalanine 238–methionine 258 form a helical membrane-spanning segment. Residues tyrosine 259–glutamate 277 lie on the Extracellular side of the membrane. A helical transmembrane segment spans residues alanine 278–leucine 298. At arginine 299–lysine 320 the chain is on the cytoplasmic side.

The protein belongs to the G-protein coupled receptor 1 family.

It localises to the cell membrane. In terms of biological role, odorant receptor. This is Olfactory receptor 13C8 (OR13C8) from Homo sapiens (Human).